The following is a 315-amino-acid chain: MPELLVFPAQTDLHEHPLYRAGHLILQDRASCLPAMLLDPRQAPMSWMPVPPQAIKTSHLAALLKNQGKIFAFDLDARRLASMATLLAWAGVSCCELAEEDFLAVSPLDPRYREVHYVLLDPSCSGSGMPSRQLEEPGAGTPSPVRLHALAGFQQRALCHALTFPSLQRLVYSMCSLCQEENEDMVQDALQQNPGAFRLAPALPARPHRGLSTFPGAEHCLRASPKTTLSGGFFVAVIERVEMPTSASQAKASAPERTPSPAPKRKKRAKSCSRCLHTALHIAEAPGSLLPGGKGRCLSSPWKTLGPHRRQQFAF.

S-adenosyl-L-methionine is bound by residues 50-56 (VPPQAIK), Asp74, Arg79, and Asp121. Residue Cys175 is the Nucleophile of the active site. A disordered region spans residues 245–269 (TSASQAKASAPERTPSPAPKRKKRA).

The protein belongs to the class I-like SAM-binding methyltransferase superfamily. RsmB/NOP family. As to expression, ubiquitous.

May have S-adenosyl-L-methionine-dependent methyl-transferase activity. This chain is Putative methyltransferase NSUN5C (NSUN5P2), found in Homo sapiens (Human).